A 137-amino-acid polypeptide reads, in one-letter code: NADPH-dependent 7-cyano-7-deazaguanine reductase (137 aa).

The Thioimide intermediate role is filled by C45. The Proton donor role is filled by D52. Substrate is bound by residues 68–70 (VEL) and 87–88 (QE).

The protein belongs to the GTP cyclohydrolase I family. QueF type 1 subfamily.

The protein localises to the cytoplasm. The enzyme catalyses 7-aminomethyl-7-carbaguanine + 2 NADP(+) = 7-cyano-7-deazaguanine + 2 NADPH + 3 H(+). The protein operates within tRNA modification; tRNA-queuosine biosynthesis. Functionally, catalyzes the NADPH-dependent reduction of 7-cyano-7-deazaguanine (preQ0) to 7-aminomethyl-7-deazaguanine (preQ1). The chain is NADPH-dependent 7-cyano-7-deazaguanine reductase from Thermotoga petrophila (strain ATCC BAA-488 / DSM 13995 / JCM 10881 / RKU-1).